Consider the following 543-residue polypeptide: MTAHENEVQLFNRGEKVLCYEPDESKARVLYDSKVLAVYERKDAANLRYFDYKIHFQGWNSSWDRNVRAASLLKDNEENRKLQRELAEAAQLQKTGGYSYKDSKTPTLPSSKKKRLARGGHVEDPTADPLDISLPSSKKKRLARGGHVEDPTADPLDISLAHLPATPKPELPAQQKRGARSRDGSGNRSRDGSGNRSRDNSSGRKKQRDKSKGGDKNDDGERRSARSQFSLHVSPKDTHTTDAEKRIHQEDRVMLRISERLREYMEYDYNMVCKLEKQHALPARTPIVTILENFVKQRAVELAIGIKQDSSRARNTLSRNARMEREYDRVMSIVCMLKEVVDGLRIYFEFHLEDHLLYREEKDYALGFLTDNNMKNCSLLLNKSYEFINPSGDNELISMAGNVNGTNGVDGPLLGDIEYENQLQKCLRYIEKNSAKNNIALAYTAAYKLPMEMRGFLRETFSWSLLSEESPPEKSIIFGAPHLARMLVLLPECLNASPISNEKLVDLLPHLDSFINYLENHKEWFDKQNYLDPLIDQGRELSV.

The 81-residue stretch at 10 to 90 (LFNRGEKVLC…KLQRELAEAA (81 aa)) folds into the Chromo domain. Positions 93-247 (QKTGGYSYKD…THTTDAEKRI (155 aa)) are disordered. 3 stretches are compositionally biased toward basic and acidic residues: residues 180–202 (RSRD…DNSS), 210–224 (KSKG…ERRS), and 234–247 (SPKD…EKRI). One can recognise an MRG domain in the interval 249 to 542 (QEDRVMLRIS…PLIDQGRELS (294 aa)).

In terms of assembly, component of the male-specific lethal (MSL) histone acetyltransferase complex, composed of mof, mle, msl-1, msl-2 and msl-3 proteins, as well as roX1 and roX2 non-coding RNAs. Ubiquitinated by msl-2.

The protein localises to the nucleus. It is found in the chromosome. Functionally, component of the male-specific lethal (MSL) histone acetyltransferase complex, a multiprotein complex essential for elevating transcription of the single X chromosome in the male (X chromosome dosage compensation). The MSL complex specifically associates with the single X chromosome in males and mediates formation of H4K16ac, promoting a two-fold activation of X chromosome. Acts as a histone reader that specifically recognizes and binds histone H3 trimethylated at 'Lys-36' (H3K36me3) and histone H4 monomethylated at 'Lys-20' (H4K20me1). Within the MSL complex, mediates the spreading of the MSL complex from initiation sites on the male X chromosome to flanking chromatin. Following initial recruitment of the MSL complex to male X chromosome by msl-2, msl-3 binds H3K36me3 and promotes spreading of the MSL complex in cis. In addition to its role in dosage compensation in males, promotes germline stem cell differentiation in females: recognizes and binds H3K36me3, promoting recruitment of the ATAC complex and transcription of genes, such as RpS19b. This chain is Protein male-specific lethal-3 (msl-3), found in Drosophila virilis (Fruit fly).